The sequence spans 363 residues: MALKHDWTKEEILEIYNKPFMELLYDAATIHREHHDPNTVQVSTLLSIKTGGCPEDCGYCPQAARYHTDLEGNDLMSVNQVKAQALRAKASGSSRVCMGAAWRNVKDGEEFDNVLEMVRSINKLDMEVCCTLGMLTENQAQRLAEAGLYAYNHNLDSSEEYYKEVISTRGYQDRLDTIGNVRKTNVTVCSGGIIGMGESEADRAGMLVALSTLNPQPESVPINALVPVEGTPMEEQEPVPIWEMIRMVATTRIVMPETQVRLSAGRTQMSREGQAMCFFAGANSIFAGDKLLTTPNPDVSEDMEMFKMLGLNPQKAFEKKSQPESVAAEKSKYQSQGEKPRWSRPEHKIDRNLEAQQNAKTKA.

The Radical SAM core domain maps to 38 to 266 (NTVQVSTLLS…ETQVRLSAGR (229 aa)). [4Fe-4S] cluster contacts are provided by Cys53, Cys57, and Cys60. Residues Cys97, Cys129, Cys189, and Arg261 each coordinate [2Fe-2S] cluster. Positions 315 to 363 (KAFEKKSQPESVAAEKSKYQSQGEKPRWSRPEHKIDRNLEAQQNAKTKA) are disordered. Over residues 316 to 353 (AFEKKSQPESVAAEKSKYQSQGEKPRWSRPEHKIDRNL) the composition is skewed to basic and acidic residues. Residues 354-363 (EAQQNAKTKA) show a composition bias toward polar residues.

This sequence belongs to the radical SAM superfamily. Biotin synthase family. As to quaternary structure, homodimer. The cofactor is [4Fe-4S] cluster. Requires [2Fe-2S] cluster as cofactor.

It carries out the reaction (4R,5S)-dethiobiotin + (sulfur carrier)-SH + 2 reduced [2Fe-2S]-[ferredoxin] + 2 S-adenosyl-L-methionine = (sulfur carrier)-H + biotin + 2 5'-deoxyadenosine + 2 L-methionine + 2 oxidized [2Fe-2S]-[ferredoxin]. Its pathway is cofactor biosynthesis; biotin biosynthesis; biotin from 7,8-diaminononanoate: step 2/2. Its function is as follows. Catalyzes the conversion of dethiobiotin (DTB) to biotin by the insertion of a sulfur atom into dethiobiotin via a radical-based mechanism. This Christiangramia forsetii (strain DSM 17595 / CGMCC 1.15422 / KT0803) (Gramella forsetii) protein is Biotin synthase.